A 1056-amino-acid polypeptide reads, in one-letter code: Pleckstrin homology domain-containing family M member 1 (1056 aa).

One can recognise an RUN domain in the interval 41–183 (TSEDGDANTM…LSFELSYKSA (143 aa)). Disordered stretches follow at residues 215–245 (QRKE…RRNQ), 277–303 (GSKS…EDSD), and 360–422 (PAQA…QAHD). Residue Ser219 is modified to Phosphoserine. The segment covering 389-404 (PVESTSGQQPSSTVSE) has biased composition (polar residues). 2 positions are modified to phosphoserine: Ser432 and Ser435. The tract at residues 451 to 483 (SREQPLESASDHPIASYRGTPGSRPGLHRHFSQ) is disordered. Ser490 is subject to Phosphoserine. The 92-residue stretch at 534 to 625 (GLMKLGTVER…WLDRVREALQ (92 aa)) folds into the PH 1 domain. The LIR motif lies at 632 to 638 (EDEWVNV). The tract at residues 654–1056 (CLSPSDLLSE…RKYQEQNIFA (403 aa)) is interaction with RAB7A. The PH 2 domain maps to 683–777 (DAIKESLLYL…WRDLVRKVLA (95 aa)). The segment at 986–1040 (QHVYHCDLCTQRGFICQICQHHDIIFPFEFDTTVRCAECKTVFHQSCQAVVKKGC) adopts a Phorbol-ester/DAG-type zinc-finger fold.

Interacts (via N- and C-terminus) with RAB7A (GTP-bound form). Simultaneously interacts with RAB7A and ARL8B; bringing about clustering and fusion of late endosomes and lysosomes. Interacts (via RUN domain) with ARL8B (GTP-bound form); the interaction is required for PLEKHM1 localization to lysosomes and for ARL8B function in delivery and degradation of endocytic and autophagic cargo in lysosomes. PLEKHM1 and PLEKHM2 compete for interaction with ARL8B. Interacts with ARL8A; the interaction is weaker than with ARL8B. Interacts with VPS41, VPS11, VPS18, VPS33A and VPS39; indicative for an association with the HOPS complex; the interactions with, at least, VPS41, VPS11, VPS18 and VPS33A require ARL8B. Interacts with GABARAP, GABARAPL, GABARAPL2, MAP1LC3A, MAP1LC3B and MAP1LC3C. Interacts with PAFAH1B. Interacts (via N- and C-terminus) with NDEL1. Interacts (via C-terminus) with MAP3K7. Interacts (via N- and C-terminus) with FAM98A. Interacts (via C-terminus) with DEF8; this interaction is weak but increased in a RAB7A-dependent manner. In colon carcinoma and breast carcinoma cells, it interacts with sialyl-lex-positive protein. In terms of assembly, (Microbial infection) Interacts with Salmonella typhimurium sifA. In terms of tissue distribution, expressed in placenta, liver, prostate, thymus, spleen, ovary, colon, colon carcinoma and peripheral blood lymphocytes (PBL). Weakly expressed in brain, lung, kidney, and testis. No expression in heart, skeletal muscle, pancreas and small intestine. Predominantly expressed in the breast carcinoma cell line MCF-7.

Its subcellular location is the autolysosome membrane. It localises to the endosome membrane. The protein resides in the late endosome membrane. The protein localises to the lysosome membrane. Its function is as follows. Acts as a multivalent adapter protein that regulates Rab7-dependent and HOPS complex-dependent fusion events in the endolysosomal system and couples autophagic and the endocytic trafficking pathways. Acts as a dual effector of RAB7A and ARL8B that simultaneously binds these GTPases, bringing about clustering and fusion of late endosomes and lysosomes. Required for late stages of endolysosomal maturation, facilitating both endocytosis-mediated degradation of growth factor receptors and autophagosome clearance. Interaction with Arl8b is a crucial factor in the terminal maturation of autophagosomes and to mediate autophagosome-lysosome fusion. Positively regulates lysosome peripheral distribution and ruffled border formation in osteoclasts. May be involved in negative regulation of endocytic transport from early endosome to late endosome/lysosome implicating its association with Rab7. May have a role in sialyl-lex-mediated transduction of apoptotic signals. Involved in bone resorption. In terms of biological role, (Microbial infection) In case of infection contributes to Salmonella typhimurium pathogenesis by supporting the integrity of the Salmonella-containing vacuole (SCV) probably in concert with the HOPS complex and Rab7. This chain is Pleckstrin homology domain-containing family M member 1, found in Homo sapiens (Human).